The chain runs to 186 residues: Ribosome-recycling factor (186 aa).

This sequence belongs to the RRF family.

Its subcellular location is the cytoplasm. In terms of biological role, responsible for the release of ribosomes from messenger RNA at the termination of protein biosynthesis. May increase the efficiency of translation by recycling ribosomes from one round of translation to another. This is Ribosome-recycling factor from Cytophaga hutchinsonii (strain ATCC 33406 / DSM 1761 / CIP 103989 / NBRC 15051 / NCIMB 9469 / D465).